Consider the following 414-residue polypeptide: Serine hydroxymethyltransferase (414 aa).

Residues L121 and 125 to 127 (GHL) each bind (6S)-5,6,7,8-tetrahydrofolate. K229 carries the post-translational modification N6-(pyridoxal phosphate)lysine.

The protein belongs to the SHMT family. As to quaternary structure, homodimer. The cofactor is pyridoxal 5'-phosphate.

The protein resides in the cytoplasm. The catalysed reaction is (6R)-5,10-methylene-5,6,7,8-tetrahydrofolate + glycine + H2O = (6S)-5,6,7,8-tetrahydrofolate + L-serine. Its pathway is one-carbon metabolism; tetrahydrofolate interconversion. It functions in the pathway amino-acid biosynthesis; glycine biosynthesis; glycine from L-serine: step 1/1. Functionally, catalyzes the reversible interconversion of serine and glycine with tetrahydrofolate (THF) serving as the one-carbon carrier. This reaction serves as the major source of one-carbon groups required for the biosynthesis of purines, thymidylate, methionine, and other important biomolecules. Also exhibits THF-independent aldolase activity toward beta-hydroxyamino acids, producing glycine and aldehydes, via a retro-aldol mechanism. The protein is Serine hydroxymethyltransferase of Verminephrobacter eiseniae (strain EF01-2).